Consider the following 1271-residue polypeptide: Protein flightless-1 homolog (1271 aa).

N-acetylmethionine is present on M1. The segment at M1–K427 is interaction with LRRFIP1 and LRRFIP2. LRR repeat units follow at residues L7–M32, T33–L55, Q56–L78, S80–L103, D104–A126, K127–N149, L150–L173, H175–A196, M197–L222, S223–L245, S247–W268, V269–L291, K293–L316, T317–C339, P340–T363, and I365–R385. The residue at position 21 (K21) is an N6-acetyllysine. The residue at position 406 (S406) is a Phosphoserine. Phosphoserine; by SGK3 is present on S436. The segment at V495–E827 is interaction with ACTL6A. Gelsolin-like repeat units follow at residues F509–L591, N629–W703, and L759–F831. S860 is modified (phosphoserine). The tract at residues K951–Q977 is disordered. Positions T952–E967 are enriched in basic and acidic residues. Over residues E968 to Q977 the composition is skewed to acidic residues. One copy of the Gelsolin-like 4 repeat lies at K1183 to F1256.

As to quaternary structure, interacts with actin, ACTL6A and NCOA2. Interacts with CARM1. Interacts with LRRFIP1, LRRFIP2 and MYD88. Upon LPS stimulation, LRRFIP2 competes for MYD88-binding; LRRFIP1 constitutively blocks the interaction with MyD88, even in the absence of LPS. Interacts with the nuclear receptors ESR1 and THRB. Interacts with SGK3. Interacts (via the gelsolin-like region) with TMOD1 and TMOD3. Interacts with LMOD2, VCL, GSN and DES. As to expression, expressed in blastocyst.

The protein localises to the nucleus. Its subcellular location is the cytoplasm. The protein resides in the cytoskeleton. It is found in the microtubule organizing center. It localises to the centrosome. The protein localises to the cell junction. Its subcellular location is the focal adhesion. The protein resides in the cell projection. It is found in the podosome. Is a regulator of actin polymerization, required for proper myofibril organization and regulation of the length of sarcomeric thin filaments. It also plays a role in the assembly of cardiomyocyte cell adhesion complexes. Regulates cytoskeletal rearrangements involved in cytokinesis and cell migration, by inhibiting Rac1-dependent paxillin phosphorylation. May play a role as coactivator in transcriptional activation by hormone-activated nuclear receptors (NR) and acts in cooperation with NCOA2 and CARM1. Involved in estrogen hormone signaling. The protein is Protein flightless-1 homolog (Flii) of Mus musculus (Mouse).